The chain runs to 98 residues: Molybdopterin synthase sulfur carrier subunit (98 aa).

G98 is modified (1-thioglycine; alternate). At G98 the chain carries Glycyl adenylate; alternate.

This sequence belongs to the MoaD family. MOCS2A subfamily. Heterotetramer; composed of 2 small (MOCS2A) and 2 large (MOCS2B) subunits. Post-translationally, C-terminal thiocarboxylation occurs in 2 steps, it is first acyl-adenylated (-COAMP) via the hesA/moeB/thiF part of MOCS3, then thiocarboxylated (-COSH) via the rhodanese domain of MOCS3.

The protein localises to the cytoplasm. It participates in cofactor biosynthesis; molybdopterin biosynthesis. Acts as a sulfur carrier required for molybdopterin biosynthesis. Component of the molybdopterin synthase complex that catalyzes the conversion of precursor Z into molybdopterin by mediating the incorporation of 2 sulfur atoms into precursor Z to generate a dithiolene group. In the complex, serves as sulfur donor by being thiocarboxylated (-COSH) at its C-terminus by MOCS3. After interaction with MOCS2B, the sulfur is then transferred to precursor Z to form molybdopterin. This chain is Molybdopterin synthase sulfur carrier subunit, found in Aedes aegypti (Yellowfever mosquito).